Consider the following 283-residue polypeptide: Nucleotide-binding protein ABBFA_002973 (283 aa).

9–16 (GQSGSGKS) is an ATP binding site. 59–62 (DVRS) lines the GTP pocket.

It belongs to the RapZ-like family.

Functionally, displays ATPase and GTPase activities. The chain is Nucleotide-binding protein ABBFA_002973 from Acinetobacter baumannii (strain AB307-0294).